We begin with the raw amino-acid sequence, 58 residues long: UPF0391 membrane protein ABO_0024 (58 aa).

The next 2 helical transmembrane spans lie at 4-24 and 28-48; these read WALT…GGIA and ASIA…SLVV.

This sequence belongs to the UPF0391 family.

The protein resides in the cell membrane. This is UPF0391 membrane protein ABO_0024 from Alcanivorax borkumensis (strain ATCC 700651 / DSM 11573 / NCIMB 13689 / SK2).